The primary structure comprises 201 residues: Probable nicotinate-nucleotide adenylyltransferase (201 aa).

Belongs to the NadD family.

It carries out the reaction nicotinate beta-D-ribonucleotide + ATP + H(+) = deamido-NAD(+) + diphosphate. It functions in the pathway cofactor biosynthesis; NAD(+) biosynthesis; deamido-NAD(+) from nicotinate D-ribonucleotide: step 1/1. In terms of biological role, catalyzes the reversible adenylation of nicotinate mononucleotide (NaMN) to nicotinic acid adenine dinucleotide (NaAD). The polypeptide is Probable nicotinate-nucleotide adenylyltransferase (Carboxydothermus hydrogenoformans (strain ATCC BAA-161 / DSM 6008 / Z-2901)).